A 133-amino-acid chain; its full sequence is ATP synthase epsilon chain (133 aa).

The protein belongs to the ATPase epsilon chain family. In terms of assembly, F-type ATPases have 2 components, CF(1) - the catalytic core - and CF(0) - the membrane proton channel. CF(1) has five subunits: alpha(3), beta(3), gamma(1), delta(1), epsilon(1). CF(0) has three main subunits: a, b and c.

The protein resides in the cell membrane. Functionally, produces ATP from ADP in the presence of a proton gradient across the membrane. In Lawsonia intracellularis (strain PHE/MN1-00), this protein is ATP synthase epsilon chain.